A 319-amino-acid chain; its full sequence is MELLSPPLRDVDLTGPDGSLCNFATADDFYDDPCFDSPDLRFFEDLDPRLVHVGALLKPEEHSHFPAAAHPAPGAREDEHVRAPSGHHQAGRCLLWACKACKRKTTNADRRKAATMRERRRLSKVNEAFETLKRCTSSNPNQRLPKVEILRNAIRYIEGLQALLRDQDAAPPGAAAAFYAPGPLPPGRGGEHYSGDSDASSPRSNCSDGMMDYSGPPSGARRRNCYDGTYYSEAPSEPRPGKNAAVSSLDCLSSIVESISTESPAAPALLLADTPRESSPGPQEAAAGSEVERGTPTPSPDAAPQCPASANPNPIYQVL.

Methionine 1 participates in a covalent cross-link: Peptide (Met-Gly) (interchain with G-Cter in ubiquitin). An N6-methyllysine; by EHMT2 modification is found at lysine 104. The region spanning aspartate 109–leucine 160 is the bHLH domain. 2 disordered regions span residues alanine 174–arginine 221 and alanine 266–leucine 319. Composition is skewed to polar residues over residues serine 197 to serine 207 and alanine 308 to leucine 319.

As to quaternary structure, efficient DNA binding requires dimerization with another bHLH protein. Seems to form active heterodimers with ITF-2. Interacts with SUV39H1. Interacts with DDX5. Interacts with CHD2. Interacts with TSC22D3. Interacts with SETD3. Interacts with P-TEFB complex; promotes the transcriptional activity of MYOD1 through its CDK9-mediated phosphorylation. Interacts with CSRP3. Interacts with NUPR1. Post-translationally, phosphorylated by CDK9. This phosphorylation promotes its function in muscle differentiation. In terms of processing, acetylated by a complex containing EP300 and PCAF. The acetylation is essential to activate target genes. Conversely, its deacetylation by SIRT1 inhibits its function. Ubiquitinated on the N-terminus; which is required for proteasomal degradation. Post-translationally, methylation at Lys-104 by EHMT2/G9a inhibits myogenic activity.

The protein resides in the nucleus. In terms of biological role, acts as a transcriptional activator that promotes transcription of muscle-specific target genes and plays a role in muscle differentiation. Together with MYF5 and MYOG, co-occupies muscle-specific gene promoter core region during myogenesis. Induces fibroblasts to differentiate into myoblasts. Interacts with and is inhibited by the twist protein. This interaction probably involves the basic domains of both proteins. This chain is Myoblast determination protein 1 (MYOD1), found in Sus scrofa (Pig).